The chain runs to 65 residues: Large ribosomal subunit protein bL35 (65 aa).

It belongs to the bacterial ribosomal protein bL35 family.

The protein is Large ribosomal subunit protein bL35 of Thermoanaerobacter pseudethanolicus (strain ATCC 33223 / 39E) (Clostridium thermohydrosulfuricum).